Here is a 186-residue protein sequence, read N- to C-terminus: MPTPNKAASVAELKDAFQSSNAAVLTEYRGLTVAQLKTLRRSLGENAQYAVVKNTLTKIAANQAGITALDEHFAGPTAVAFITGDPVESAKSLRDFAKDNPNLIIKAGVLDGKALTADEIKKLADLESREVLLSKLAGAFKGKQSQAASLFQALPSKFVRTAKRFASSSPSRAVPSNSARALIHAA.

Belongs to the universal ribosomal protein uL10 family. As to quaternary structure, part of the ribosomal stalk of the 50S ribosomal subunit. The N-terminus interacts with L11 and the large rRNA to form the base of the stalk. The C-terminus forms an elongated spine to which L12 dimers bind in a sequential fashion forming a multimeric L10(L12)X complex.

Its function is as follows. Forms part of the ribosomal stalk, playing a central role in the interaction of the ribosome with GTP-bound translation factors. This chain is Large ribosomal subunit protein uL10 (rplJ), found in Streptomyces virginiae (Streptomyces cinnamonensis).